The sequence spans 272 residues: MAAASSVSSPPLCLAGRVAIVTGSSRGIGRAIAIHLAELGARVVVNYSTSPVEAEKVATAITTNCSKDAEVAGKSPRVIVVKADISEPSQVKSLFDEAERVFESPVHILVNSAAIADPNHSTISDMSVELFDRIISVNTRGAFICAREAANRLKRGGGGRIILLSTSLVQTLNTNYGSYTASKAAVEAMAKILAKELKGTEITVNCVSPGPVATEMFYTGLSNEIVEKVKSQNLFGRIGETKDIAPVVGFLASDAGEWINGQVIMANGGCLL.

The N-terminal 53 residues, 1–53 (MAAASSVSSPPLCLAGRVAIVTGSSRGIGRAIAIHLAELGARVVVNYSTSPVE), are a transit peptide targeting the chloroplast. 26 to 50 (RGIGRAIAIHLAELGARVVVNYSTS) lines the NADP(+) pocket. Serine 165 is a binding site for substrate. Tyrosine 179 acts as the Proton acceptor in catalysis.

This sequence belongs to the short-chain dehydrogenases/reductases (SDR) family.

Its subcellular location is the plastid. It is found in the chloroplast. Functionally, aldehyde reductase that catalyzes the reduction of the aldehyde carbonyl groups on saturated and alpha,beta-unsaturated aldehydes with more than 5 carbons. No activity on alpha,beta-unsaturated ketones. Can use propionaldehyde, butyraldehyde, methylglyoxal, (e)-2-pentenal, (E)-2-hexenal, (Z)-3-hexenal and (E)-2-nonenal as substrates, but not propenal (acrolein), crotonaldehyde, 2-butanone, 3-buten-2-one or 1-penten-3-one. This Arabidopsis thaliana (Mouse-ear cress) protein is NADPH-dependent aldehyde reductase 2, chloroplastic.